The primary structure comprises 148 residues: Hemoglobin subunit beta (148 aa).

One can recognise a Globin domain in the interval 3-148; that stretch reads XWTDXERAAI…VVSALGRQYH (146 aa). Residues His64 and His93 each contribute to the heme b site.

Belongs to the globin family. As to quaternary structure, heterotetramer of two alpha chains and two beta chains. As to expression, red blood cells.

Its function is as follows. Involved in oxygen transport from gills to the various peripheral tissues. In Decapterus maruadsi (Japanese scad), this protein is Hemoglobin subunit beta (hbb).